The following is a 156-amino-acid chain: WASQVSENRPVCKAIIQGKQFEGLVDTGADVSIIALNQWPKNWPKQKAVTGLVGIGTASEVYQSTEILHCLGPDNQESTVQPMITSIPLNLWGRDLLQQWGAEITMPTPLYSPTSQKIMTKMGYIPGKGLGKNEDGIKVPVEAKINQKREGIGYPF.

A Peptidase A2 domain is found at 21–96; it reads FEGLVDTGAD…IPLNLWGRDL (76 aa). Aspartate 26 is an active-site residue. The G-patch domain occupies 111 to 156; the sequence is YSPTSQKIMTKMGYIPGKGLGKNEDGIKVPVEAKINQKREGIGYPF.

Belongs to the peptidase A2 family. HERV class-II K(HML-2) subfamily. In terms of assembly, active as a homodimer. Autoproteolytically processed at the N-terminus. Expected C-terminal autoprocessing not detected. The sequence shown is that of the processed Pro protein.

The enzyme catalyses Processing at the authentic HIV-1 PR recognition site and release of the mature p17 matrix and the p24 capsid protein, as a result of the cleavage of the -SQNY-|-PIVQ- cleavage site.. Retroviral proteases have roles in the processing of the primary translation products and the maturation of the viral particle. Endogenous Pro proteins may have kept, lost or modified their original function during evolution. This chain is Endogenous retrovirus group K member 21 Pro protein (ERVK-21), found in Homo sapiens (Human).